The sequence spans 233 residues: Antiholin-like protein LrgB (233 aa).

The next 7 membrane-spanning stretches (helical) occupy residues 7–27 (INTP…ATFL), 33–53 (GFFL…FLKL), 63–83 (IGGD…AIPL), 97–117 (ILGG…LIAE), 124–144 (GIIA…PVSA), 152–172 (LTSL…SKLI), and 212–232 (ISLV…ATLL).

This sequence belongs to the CidB/LrgB family. LrgB subfamily.

It localises to the cell membrane. Inhibits the expression or activity of extracellular murein hydrolases by interacting, possibly with LrgA, with the holin-like proteins CidA and/or CidB. The LrgAB and CidAB proteins may affect the proton motive force of the membrane. May be involved in programmed cell death (PCD), possibly triggering PCD in response to antibiotics and environmental stresses. This is Antiholin-like protein LrgB from Staphylococcus saprophyticus subsp. saprophyticus (strain ATCC 15305 / DSM 20229 / NCIMB 8711 / NCTC 7292 / S-41).